We begin with the raw amino-acid sequence, 253 residues long: uncharacterized protein (253 aa).

The span at 175–184 shows a compositional bias: polar residues; it reads NPTQTSPGKP. The tract at residues 175–253 is disordered; the sequence is NPTQTSPGKP…ATENEDRLPS (79 aa). At serine 180 the chain carries Phosphoserine. Composition is skewed to low complexity over residues 185-196 and 203-214; these read STSESSQTDTST and TPTTTRASSYTT. Residues 215 to 242 are compositionally biased toward polar residues; sequence LVSTSNQVSNEAEASAVETSANQAQNTE.

The protein belongs to the TRAPP small subunits family. BET3 subfamily.

This is an uncharacterized protein from Schizosaccharomyces pombe (strain 972 / ATCC 24843) (Fission yeast).